Here is a 494-residue protein sequence, read N- to C-terminus: Guanosine-5'-triphosphate,3'-diphosphate pyrophosphatase (494 aa).

It belongs to the GppA/Ppx family. GppA subfamily.

It carries out the reaction guanosine 3'-diphosphate 5'-triphosphate + H2O = guanosine 3',5'-bis(diphosphate) + phosphate + H(+). The protein operates within purine metabolism; ppGpp biosynthesis; ppGpp from GTP: step 2/2. Catalyzes the conversion of pppGpp to ppGpp. Guanosine pentaphosphate (pppGpp) is a cytoplasmic signaling molecule which together with ppGpp controls the 'stringent response', an adaptive process that allows bacteria to respond to amino acid starvation, resulting in the coordinated regulation of numerous cellular activities. The chain is Guanosine-5'-triphosphate,3'-diphosphate pyrophosphatase from Erwinia tasmaniensis (strain DSM 17950 / CFBP 7177 / CIP 109463 / NCPPB 4357 / Et1/99).